The primary structure comprises 524 residues: Serine/threonine-protein kinase PAK 2 (524 aa).

Positions 1–81 are disordered; it reads MSDNGELEDK…PEISPPSDFE (81 aa). Position 2 is an N-acetylserine (Ser-2). Ser-2, Ser-20, Ser-55, and Ser-58 each carry phosphoserine. Position 60 is a phosphothreonine (Thr-60). Lys-62 carries the N6-acetyllysine modification. Ser-64 carries the phosphoserine modification. A compositionally biased stretch (basic and acidic residues) spans 67–81; the sequence is KEKERPEISPPSDFE. Residues 69-112 form a GTPase-binding region; sequence KERPEISPPSDFEHTIHVGFDAVTGEFTGMPEQWARLLQTSNIT. The tract at residues 69–137 is autoregulatory region; sequence KERPEISPPS…KFYDSNTVKQ (69 aa). A CRIB domain is found at 74–87; the sequence is ISPPSDFEHTIHVG. Positions 88 to 248 are linker; sequence FDAVTGEFTG…IVSIGDPKKK (161 aa). Lys-128 is subject to N6-acetyllysine. Position 134 is a phosphothreonine (Thr-134). Tyr-139 bears the Phosphotyrosine mark. Position 141 is a phosphoserine (Ser-141). Residue Thr-143 is modified to Phosphothreonine. Phosphoserine is present on Ser-152. Phosphothreonine is present on residues Thr-159 and Thr-169. Acidic residues predominate over residues 169–178; the sequence is TEEDDDDEEA. The segment at 169-188 is disordered; sequence TEEDDDDEEAAPPVIAPRPD. At Ser-197 the chain carries Phosphoserine. Residues 204 to 228 are disordered; the sequence is APVGDSHVDSGAKSSDKQKKKTKMT. Basic and acidic residues predominate over residues 209–228; the sequence is SHVDSGAKSSDKQKKKTKMT. The Nuclear localization signal signature appears at 245 to 251; the sequence is PKKKYTR. Positions 249 to 500 constitute a Protein kinase domain; sequence YTRYEKIGQG…AKELLQHPFL (252 aa). Residues 255 to 263 and Lys-278 each bind ATP; that span reads IGQGASGTV. Asp-368 (proton acceptor) is an active-site residue. Thr-402 bears the Phosphothreonine; by autocatalysis mark.

As to quaternary structure, interacts tightly with GTP-bound but not GDP-bound CDC42/p21 and RAC1. Interacts with SH3MD4. Interacts with SCRIB. Interacts with ARHGEF7 and GIT1. PAK-2p34 interacts with ARHGAP10. Interacts with RAC1. Full-length PAK2 is autophosphorylated when activated by CDC42/p21. Following cleavage, both peptides, PAK-2p27 and PAK-2p34, become highly autophosphorylated. Autophosphorylation of PAK-2p27 can occur in the absence of any effectors and is dependent on phosphorylation of Thr-402, because PAK-2p27 is acting as an exogenous substrate. In terms of processing, during apoptosis proteolytically cleaved by caspase-3 or caspase-3-like proteases to yield active PAK-2p34. Post-translationally, ubiquitinated, leading to its proteasomal degradation.

It localises to the cytoplasm. It is found in the nucleus. The protein localises to the perinuclear region. The protein resides in the membrane. The enzyme catalyses L-seryl-[protein] + ATP = O-phospho-L-seryl-[protein] + ADP + H(+). The catalysed reaction is L-threonyl-[protein] + ATP = O-phospho-L-threonyl-[protein] + ADP + H(+). Activated by binding small G proteins. Binding of GTP-bound CDC42 or RAC1 to the autoregulatory region releases monomers from the autoinhibited dimer, enables phosphorylation of Thr-402 and allows the kinase domain to adopt an active structure. Following caspase cleavage, autophosphorylated PAK-2p34 is constitutively active. Its function is as follows. Serine/threonine protein kinase that plays a role in a variety of different signaling pathways including cytoskeleton regulation, cell motility, cell cycle progression, apoptosis or proliferation. Acts as a downstream effector of the small GTPases CDC42 and RAC1. Activation by the binding of active CDC42 and RAC1 results in a conformational change and a subsequent autophosphorylation on several serine and/or threonine residues. Full-length PAK2 stimulates cell survival and cell growth. Phosphorylates MAPK4 and MAPK6 and activates the downstream target MAPKAPK5, a regulator of F-actin polymerization and cell migration. Phosphorylates JUN and plays an important role in EGF-induced cell proliferation. Phosphorylates many other substrates including histone H4 to promote assembly of H3.3 and H4 into nucleosomes, BAD, ribosomal protein S6, or MBP. Phosphorylates CASP7, thereby preventing its activity. Additionally, associates with ARHGEF7 and GIT1 to perform kinase-independent functions such as spindle orientation control during mitosis. On the other hand, apoptotic stimuli such as DNA damage lead to caspase-mediated cleavage of PAK2, generating PAK-2p34, an active p34 fragment that translocates to the nucleus and promotes cellular apoptosis involving the JNK signaling pathway. Caspase-activated PAK2 phosphorylates MKNK1 and reduces cellular translation. The chain is Serine/threonine-protein kinase PAK 2 (PAK2) from Oryctolagus cuniculus (Rabbit).